We begin with the raw amino-acid sequence, 238 residues long: Survival of motor neuron-related-splicing factor 30 (238 aa).

The Tudor domain maps to 72-132; sequence SWKVGDKCMA…KPVEEGRKAK (61 aa). Residues 142-160 carry the Nuclear localization signal motif; the sequence is KKEMIAQQREYKKKKALKK. At Ser201 the chain carries Phosphoserine. An N6-acetyllysine modification is found at Lys219.

Belongs to the SMN family. In terms of assembly, associates with spliceosomes. Associates with U4/U5/U6 tri-snRNP and with U2 snRNP. Interacts (via Tudor domain) with SNRPD3 (via C-terminus); the interaction is direct. In terms of tissue distribution, detected at intermediate levels in skeletal muscle, and at low levels in heart and pancreas.

It localises to the nucleus speckle. The protein resides in the nucleus. The protein localises to the cajal body. Its function is as follows. Involved in spliceosome assembly. The sequence is that of Survival of motor neuron-related-splicing factor 30 (SMNDC1) from Homo sapiens (Human).